The primary structure comprises 172 residues: NADH dehydrogenase [ubiquinone] 1 alpha subcomplex subunit 8 (172 aa).

2 CHCH domains span residues 33–74 and 75–118; these read GAQC…FRQI and KRHC…LGWV. 4 short sequence motifs (cx9C motif) span residues 36 to 46, 56 to 66, 78 to 88, and 100 to 110; these read CDKPNKEFMLC, CLEEGKLVNKC, CAEPFTEYWTC, and CRKQQAKFDEC. 4 cysteine pairs are disulfide-bonded: cysteine 36–cysteine 66, cysteine 46–cysteine 56, cysteine 78–cysteine 110, and cysteine 88–cysteine 100. Positions 133 to 164 are disordered; sequence TDRPLPENPYHSRPRPDPSPEIEGDLQPATHG.

The protein belongs to the complex I NDUFA8 subunit family. As to quaternary structure, complex I is composed of 45 different subunits. Post-translationally, may contain intrachain disulfide bonds, as evidenced by its electrophoretic mobility under reducing vs non-reducing conditions.

It localises to the mitochondrion inner membrane. The protein resides in the mitochondrion intermembrane space. Its subcellular location is the mitochondrion. Functionally, accessory subunit of the mitochondrial membrane respiratory chain NADH dehydrogenase (Complex I), that is believed not to be involved in catalysis. Complex I functions in the transfer of electrons from NADH to the respiratory chain. The immediate electron acceptor for the enzyme is believed to be ubiquinone. In Homo sapiens (Human), this protein is NADH dehydrogenase [ubiquinone] 1 alpha subcomplex subunit 8 (NDUFA8).